The sequence spans 400 residues: Ribosomal RNA large subunit methyltransferase I (400 aa).

The 79-residue stretch at 6–84 (FPRLVLAKGR…NEAIDSAFFE (79 aa)) folds into the PUA domain.

It belongs to the methyltransferase superfamily. RlmI family.

It is found in the cytoplasm. It carries out the reaction cytidine(1962) in 23S rRNA + S-adenosyl-L-methionine = 5-methylcytidine(1962) in 23S rRNA + S-adenosyl-L-homocysteine + H(+). In terms of biological role, specifically methylates the cytosine at position 1962 (m5C1962) of 23S rRNA. The protein is Ribosomal RNA large subunit methyltransferase I of Klebsiella pneumoniae (strain 342).